The chain runs to 372 residues: tRNA-specific 2-thiouridylase MnmA (372 aa).

ATP-binding positions include 16 to 23 (GMSGGVDS) and Met42. Residues 102-104 (NPD) form an interaction with target base in tRNA region. The Nucleophile role is filled by Cys107. A disulfide bridge links Cys107 with Cys205. Residue Gly132 participates in ATP binding. The segment at 155–157 (KDQ) is interaction with tRNA. Cys205 (cysteine persulfide intermediate) is an active-site residue. The tract at residues 317–318 (RY) is interaction with tRNA.

Belongs to the MnmA/TRMU family.

It localises to the cytoplasm. The enzyme catalyses S-sulfanyl-L-cysteinyl-[protein] + uridine(34) in tRNA + AH2 + ATP = 2-thiouridine(34) in tRNA + L-cysteinyl-[protein] + A + AMP + diphosphate + H(+). Its function is as follows. Catalyzes the 2-thiolation of uridine at the wobble position (U34) of tRNA, leading to the formation of s(2)U34. This chain is tRNA-specific 2-thiouridylase MnmA, found in Shewanella baltica (strain OS195).